The sequence spans 154 residues: Interleukin-2 (154 aa).

The signal sequence occupies residues 1 to 20; the sequence is MYRMQLLSCIALSLALVTNS. T23 carries O-linked (GalNAc...) threonine glycosylation. A disulfide bridge links C78 with C126.

Belongs to the IL-2 family.

Its subcellular location is the secreted. Cytokine produced by activated CD4-positive helper T-cells and to a lesser extend activated CD8-positive T-cells and natural killer (NK) cells that plays pivotal roles in the immune response and tolerance. Binds to a receptor complex composed of either the high-affinity trimeric IL-2R (IL2RA/CD25, IL2RB/CD122 and IL2RG/CD132) or the low-affinity dimeric IL-2R (IL2RB and IL2RG). Interaction with the receptor leads to oligomerization and conformation changes in the IL-2R subunits resulting in downstream signaling starting with phosphorylation of JAK1 and JAK3. In turn, JAK1 and JAK3 phosphorylate the receptor to form a docking site leading to the phosphorylation of several substrates including STAT5. This process leads to activation of several pathways including STAT, phosphoinositide-3-kinase/PI3K and mitogen-activated protein kinase/MAPK pathways. Functions as a T-cell growth factor and can increase NK-cell cytolytic activity as well. Promotes strong proliferation of activated B-cells and subsequently immunoglobulin production. Plays a pivotal role in regulating the adaptive immune system by controlling the survival and proliferation of regulatory T-cells, which are required for the maintenance of immune tolerance. Moreover, participates in the differentiation and homeostasis of effector T-cell subsets, including Th1, Th2, Th17 as well as memory CD8-positive T-cells. This Papio anubis (Olive baboon) protein is Interleukin-2 (IL2).